Here is a 339-residue protein sequence, read N- to C-terminus: Very-long-chain 3-oxoacyl-CoA reductase (339 aa).

The helical transmembrane segment at 19–39 threads the bilayer; it reads VALFLLSIGGLFTACKLFSFC. Positions 64, 105, 119, 127, 146, 213, 217, 246, and 248 each coordinate NADP(+). The active-site Proton donor is Tyr-213. Catalysis depends on Lys-217, which acts as the Lowers pKa of active site Tyr.

It belongs to the short-chain dehydrogenases/reductases (SDR) family.

It is found in the endoplasmic reticulum membrane. The catalysed reaction is a very-long-chain (3R)-3-hydroxyacyl-CoA + NADP(+) = a very-long-chain 3-oxoacyl-CoA + NADPH + H(+). It participates in lipid metabolism; fatty acid biosynthesis. In terms of biological role, component of the microsomal membrane bound fatty acid elongation system, which produces the 26-carbon very long-chain fatty acids (VLCFA) from palmitate. Catalyzes the reduction of the 3-ketoacyl-CoA intermediate that is formed in each cycle of fatty acid elongation. VLCFAs serve as precursors for ceramide and sphingolipids. The sequence is that of Very-long-chain 3-oxoacyl-CoA reductase from Ajellomyces capsulatus (strain NAm1 / WU24) (Darling's disease fungus).